Consider the following 404-residue polypeptide: Tryptophan synthase beta chain (404 aa).

At lysine 90 the chain carries N6-(pyridoxal phosphate)lysine.

It belongs to the TrpB family. In terms of assembly, tetramer of two alpha and two beta chains. Pyridoxal 5'-phosphate is required as a cofactor.

It carries out the reaction (1S,2R)-1-C-(indol-3-yl)glycerol 3-phosphate + L-serine = D-glyceraldehyde 3-phosphate + L-tryptophan + H2O. Its pathway is amino-acid biosynthesis; L-tryptophan biosynthesis; L-tryptophan from chorismate: step 5/5. In terms of biological role, the beta subunit is responsible for the synthesis of L-tryptophan from indole and L-serine. This chain is Tryptophan synthase beta chain, found in Geobacillus thermodenitrificans (strain NG80-2).